Here is a 57-residue protein sequence, read N- to C-terminus: Large ribosomal subunit protein bL33 (57 aa).

The protein belongs to the bacterial ribosomal protein bL33 family.

This Shewanella sp. (strain W3-18-1) protein is Large ribosomal subunit protein bL33.